The primary structure comprises 51 residues: Small ribosomal subunit protein eS31 (51 aa).

Cysteine 22, cysteine 25, cysteine 40, and cysteine 43 together coordinate Zn(2+). The C4-type zinc finger occupies 22–43; sequence CPRCGPGVFMADHGDRWACGRC.

It belongs to the eukaryotic ribosomal protein eS31 family. In terms of assembly, part of the 30S ribosomal subunit. It depends on Zn(2+) as a cofactor.

This Pyrococcus abyssi (strain GE5 / Orsay) protein is Small ribosomal subunit protein eS31.